Consider the following 483-residue polypeptide: Homoserine O-acetyltransferase (483 aa).

The AB hydrolase-1 domain maps to 47-346 (NVILICHALT…HFGHDAFLLE (300 aa)). Ser152 (nucleophile) is an active-site residue. Arg221 is a substrate binding site. Catalysis depends on residues Asp307 and His340. Position 341 (Asp341) interacts with substrate. 2 consecutive CBS domains span residues 367–423 (MSED…KISS) and 428–483 (LSRD…KGTK).

The protein belongs to the AB hydrolase superfamily. MetX family. Homodimer.

It localises to the cytoplasm. The enzyme catalyses L-homoserine + acetyl-CoA = O-acetyl-L-homoserine + CoA. It participates in amino-acid biosynthesis; L-methionine biosynthesis via de novo pathway; O-acetyl-L-homoserine from L-homoserine: step 1/1. Transfers an acetyl group from acetyl-CoA to L-homoserine, forming acetyl-L-homoserine. This chain is Homoserine O-acetyltransferase, found in Methanohalophilus mahii (strain ATCC 35705 / DSM 5219 / SLP).